A 217-amino-acid polypeptide reads, in one-letter code: MEHSTWHRLLKEELPNHYFSKINQFMDKVYEEGTIYPPRDKVFNALLETPFEEVRVVILGQDPYHGPNQAQGLSFSVPETIPAPPSLVNILKELGEDLGPRSHHDLTTWAEQGVLLLNACLTVPAGRANGHAGQIWEPFTDAVIKVLNQKDTPVVFILWGGYARKKKSLVTNPKHAIIESAHPSPLSAYRGFFGSKPFSKANAYLVSQGQPPIDWLK.

D62 (proton acceptor) is an active-site residue.

Belongs to the uracil-DNA glycosylase (UDG) superfamily. UNG family.

Its subcellular location is the cytoplasm. The catalysed reaction is Hydrolyzes single-stranded DNA or mismatched double-stranded DNA and polynucleotides, releasing free uracil.. Its function is as follows. Excises uracil residues from the DNA which can arise as a result of misincorporation of dUMP residues by DNA polymerase or due to deamination of cytosine. In Streptococcus thermophilus (strain ATCC BAA-491 / LMD-9), this protein is Uracil-DNA glycosylase.